Reading from the N-terminus, the 368-residue chain is Protein-glutamate methylesterase/protein-glutamine glutaminase 2 (368 aa).

One can recognise a Response regulatory domain in the interval 6-123 (KVLLVDDSAV…KEYLESAAGE (118 aa)). Position 57 is a 4-aspartylphosphate (aspartate 57). The region spanning 169 to 355 (IAGANKIAAL…SLERIPQCVL (187 aa)) is the CheB-type methylesterase domain. Residues serine 181, histidine 207, and aspartate 303 contribute to the active site.

It belongs to the CheB family. In terms of processing, phosphorylated by CheA. Phosphorylation of the N-terminal regulatory domain activates the methylesterase activity.

It is found in the cytoplasm. It catalyses the reaction [protein]-L-glutamate 5-O-methyl ester + H2O = L-glutamyl-[protein] + methanol + H(+). It carries out the reaction L-glutaminyl-[protein] + H2O = L-glutamyl-[protein] + NH4(+). Involved in chemotaxis. Part of a chemotaxis signal transduction system that modulates chemotaxis in response to various stimuli. Catalyzes the demethylation of specific methylglutamate residues introduced into the chemoreceptors (methyl-accepting chemotaxis proteins or MCP) by CheR. Also mediates the irreversible deamidation of specific glutamine residues to glutamic acid. In Hahella chejuensis (strain KCTC 2396), this protein is Protein-glutamate methylesterase/protein-glutamine glutaminase 2.